The sequence spans 571 residues: NADH-quinone oxidoreductase subunit C/D (571 aa).

An NADH dehydrogenase I subunit C region spans residues 1 to 171; sequence MQASEKTLNE…NLSNTMNYRR (171 aa). An NADH dehydrogenase I subunit D region spans residues 194-571; it reads AQVVLNWGPL…LDPVVGEVDR (378 aa).

This sequence in the N-terminal section; belongs to the complex I 30 kDa subunit family. The protein in the C-terminal section; belongs to the complex I 49 kDa subunit family. In terms of assembly, NDH-1 is composed of 13 different subunits. Subunits NuoB, CD, E, F, and G constitute the peripheral sector of the complex.

Its subcellular location is the cell inner membrane. The enzyme catalyses a quinone + NADH + 5 H(+)(in) = a quinol + NAD(+) + 4 H(+)(out). NDH-1 shuttles electrons from NADH, via FMN and iron-sulfur (Fe-S) centers, to quinones in the respiratory chain. The immediate electron acceptor for the enzyme in this species is believed to be ubiquinone. Couples the redox reaction to proton translocation (for every two electrons transferred, four hydrogen ions are translocated across the cytoplasmic membrane), and thus conserves the redox energy in a proton gradient. This Hydrogenobaculum sp. (strain Y04AAS1) protein is NADH-quinone oxidoreductase subunit C/D (nuoC).